The following is a 244-amino-acid chain: Probable 2-phosphosulfolactate phosphatase (244 aa).

Belongs to the ComB family. Mg(2+) serves as cofactor.

It catalyses the reaction (2R)-O-phospho-3-sulfolactate + H2O = (2R)-3-sulfolactate + phosphate. The protein is Probable 2-phosphosulfolactate phosphatase of Cyanothece sp. (strain PCC 7425 / ATCC 29141).